A 303-amino-acid chain; its full sequence is Aspartate carbamoyltransferase catalytic subunit (303 aa).

Arg-54 and Thr-55 together coordinate carbamoyl phosphate. Residue Lys-82 coordinates L-aspartate. 3 residues coordinate carbamoyl phosphate: Arg-104, His-132, and Gln-135. Positions 165 and 221 each coordinate L-aspartate. Carbamoyl phosphate-binding residues include Gly-261 and Pro-262.

It belongs to the aspartate/ornithine carbamoyltransferase superfamily. ATCase family. In terms of assembly, heterododecamer (2C3:3R2) of six catalytic PyrB chains organized as two trimers (C3), and six regulatory PyrI chains organized as three dimers (R2).

It catalyses the reaction carbamoyl phosphate + L-aspartate = N-carbamoyl-L-aspartate + phosphate + H(+). It participates in pyrimidine metabolism; UMP biosynthesis via de novo pathway; (S)-dihydroorotate from bicarbonate: step 2/3. Catalyzes the condensation of carbamoyl phosphate and aspartate to form carbamoyl aspartate and inorganic phosphate, the committed step in the de novo pyrimidine nucleotide biosynthesis pathway. This chain is Aspartate carbamoyltransferase catalytic subunit, found in Koribacter versatilis (strain Ellin345).